The chain runs to 514 residues: tRNA-2-methylthio-N(6)-dimethylallyladenosine synthase (514 aa).

The tract at residues 1–21 is disordered; that stretch reads MNEEQRKASSVDVLAERDKKA. Residues 68–186 form the MTTase N-terminal domain; the sequence is RTFLIKTYGC…LPEILEEAYL (119 aa). [4Fe-4S] cluster contacts are provided by Cys77, Cys113, Cys147, Cys223, Cys227, and Cys230. The Radical SAM core domain maps to 209–440; the sequence is REGNIKAWVN…KKVGHYSQIA (232 aa). In terms of domain architecture, TRAM spans 442–505; that stretch reads SKYEGQTVTV…QYSLNGSFVK (64 aa).

The protein belongs to the methylthiotransferase family. MiaB subfamily. Monomer. It depends on [4Fe-4S] cluster as a cofactor.

It is found in the cytoplasm. It catalyses the reaction N(6)-dimethylallyladenosine(37) in tRNA + (sulfur carrier)-SH + AH2 + 2 S-adenosyl-L-methionine = 2-methylsulfanyl-N(6)-dimethylallyladenosine(37) in tRNA + (sulfur carrier)-H + 5'-deoxyadenosine + L-methionine + A + S-adenosyl-L-homocysteine + 2 H(+). Catalyzes the methylthiolation of N6-(dimethylallyl)adenosine (i(6)A), leading to the formation of 2-methylthio-N6-(dimethylallyl)adenosine (ms(2)i(6)A) at position 37 in tRNAs that read codons beginning with uridine. In Staphylococcus aureus (strain MRSA252), this protein is tRNA-2-methylthio-N(6)-dimethylallyladenosine synthase.